A 180-amino-acid chain; its full sequence is Bifunctional protein PyrR (180 aa).

Positions 101–113 match the PRPP-binding motif; sequence VILVDDVLYTGRT.

Belongs to the purine/pyrimidine phosphoribosyltransferase family. PyrR subfamily. In terms of assembly, homodimer and homohexamer; in equilibrium.

It carries out the reaction UMP + diphosphate = 5-phospho-alpha-D-ribose 1-diphosphate + uracil. In terms of biological role, regulates transcriptional attenuation of the pyrimidine nucleotide (pyr) operon by binding in a uridine-dependent manner to specific sites on pyr mRNA. This disrupts an antiterminator hairpin in the RNA and favors formation of a downstream transcription terminator, leading to a reduced expression of downstream genes. Functionally, also displays a weak uracil phosphoribosyltransferase activity which is not physiologically significant. The polypeptide is Bifunctional protein PyrR (Bacillus cereus (strain ATCC 14579 / DSM 31 / CCUG 7414 / JCM 2152 / NBRC 15305 / NCIMB 9373 / NCTC 2599 / NRRL B-3711)).